Reading from the N-terminus, the 1122-residue chain is Telomerase reverse transcriptase (1122 aa).

The RNA-interacting domain 1 stretch occupies residues M1–T239. The interval M58–L205 is GQ motif. A required for regulating specificity for telomeric DNA and for processivity for primer elongation region spans residues W137–L141. The interval S213–S296 is disordered. The tract at residues S240 to P328 is linker. The span at T284–V295 shows a compositional bias: basic and acidic residues. Positions C306–E528 are required for oligomerization. The tract at residues F329 to D540 is RNA-interacting domain 2. The TFLY; involved in RNA binding motif lies at T332 to Y337. The interval L381 to R511 is QFP motif. The segment at L402–T422 is CP motif. S447 bears the Phosphoserine; by DYRK2 mark. The Reverse transcriptase domain maps to E595–L928. Residue Y697 is modified to Phosphotyrosine; by SRC-type Tyr-kinases. Mg(2+) is bound by residues D702, D861, and D862. Positions L907 to F921 are required for oligomerization. The interval W923–L927 is primer grip sequence. Residues D929 to D1122 form a CTE region.

Belongs to the reverse transcriptase family. Telomerase subfamily. As to quaternary structure, catalytic component of the telomerase holoenzyme complex composed of one molecule of TERT, one molecule of WRAP53/TCAB1, two molecules of H/ACA ribonucleoprotein complex subunits DKC1, NOP10, NHP2 and GAR1, and a telomerase RNA template component (TERC). The telomerase holoenzyme complex is associated with TEP1, SMG6/EST1A and POT1. The molecular chaperone HSP90/P23 complex is required for correct assembly and stabilization of the active telomerase. Interacts directly with HSP90A and PTGES3. Interacts with HSPA1A; the interaction occurs in the absence of TERC and dissociates once the complex has formed. Interacts with RAN; the interaction promotes nuclear export of TERT. Interacts with XPO1. Interacts with PTPN11; the interaction retains TERT in the nucleus. Interacts with NCL (via RRM1 and C-terminal RRM4/Arg/Gly-rich domains); the interaction is important for nucleolar localization of TERT. Interacts with SMARCA4 (via the bromodomain); the interaction regulates Wnt-mediated signaling. Interacts with MCRS1 (isoform MCRS2); the interaction inhibits in vitro telomerase activity. Interacts with PIF1; the interaction has no effect on the elongation activity of TERT. Interacts with PML; the interaction recruits TERT to PML bodies and inhibits telomerase activity. Interacts with GNL3L. Interacts with isoform 1 and isoform 2 of NVL. Interacts with DHX36. Interacts with ATF7. In terms of processing, phosphorylation at Tyr-697 under oxidative stress leads to translocation of TERT to the cytoplasm and reduces its antiapoptotic activity. Dephosphorylated by SHP2/PTPN11 leading to nuclear retention. Phosphorylation by the AKT pathway promotes nuclear location. Phosphorylation at the G2/M phase at Ser-447 by DYRK2 promotes ubiquitination by the EDVP complex and degradation. Post-translationally, ubiquitinated by the EDVP complex, a E3 ligase complex following phosphorylation at Ser-447 by DYRK2. Ubiquitinated leads to proteasomal degradation. In terms of tissue distribution, high activity in intestine, liver and testis, moderate in lung, very low in muscle, heart and brain.

Its subcellular location is the nucleus. The protein resides in the nucleolus. It is found in the nucleoplasm. The protein localises to the chromosome. It localises to the telomere. Its subcellular location is the cytoplasm. The protein resides in the PML body. The catalysed reaction is DNA(n) + a 2'-deoxyribonucleoside 5'-triphosphate = DNA(n+1) + diphosphate. Its function is as follows. Telomerase is a ribonucleoprotein enzyme essential for the replication of chromosome termini in most eukaryotes. Active in progenitor and cancer cells. Inactive, or very low activity, in normal somatic cells. Catalytic component of the teleromerase holoenzyme complex whose main activity is the elongation of telomeres by acting as a reverse transcriptase that adds simple sequence repeats to chromosome ends by copying a template sequence within the RNA component of the enzyme. Catalyzes the RNA-dependent extension of 3'-chromosomal termini with the 6-nucleotide telomeric repeat unit, 5'-TTAGGG-3'. The catalytic cycle involves primer binding, primer extension and release of product once the template boundary has been reached or nascent product translocation followed by further extension. More active on substrates containing 2 or 3 telomeric repeats. Telomerase activity is regulated by a number of factors including telomerase complex-associated proteins, chaperones and polypeptide modifiers. Modulates Wnt signaling. Plays important roles in aging and antiapoptosis. The protein is Telomerase reverse transcriptase (Tert) of Mus musculus (Mouse).